Reading from the N-terminus, the 699-residue chain is Integrator complex subunit 10 (699 aa).

Residues S220 and S370 each carry the phosphoserine modification. K453 participates in a covalent cross-link: Glycyl lysine isopeptide (Lys-Gly) (interchain with G-Cter in SUMO2).

Belongs to the Integrator subunit 10 family. Component of the Integrator complex, composed of core subunits INTS1, INTS2, INTS3, INTS4, INTS5, INTS6, INTS7, INTS8, INTS9/RC74, INTS10, INTS11/CPSF3L, INTS12, INTS13, INTS14 and INTS15. The core complex associates with protein phosphatase 2A subunits PPP2CA and PPP2R1A, to form the Integrator-PP2A (INTAC) complex. INTS10 is part of the tail subcomplex, composed of INTS10, INTS13, INTS14 and INTS15.

It is found in the nucleus. Component of the integrator complex, a multiprotein complex that terminates RNA polymerase II (Pol II) transcription in the promoter-proximal region of genes. The integrator complex provides a quality checkpoint during transcription elongation by driving premature transcription termination of transcripts that are unfavorably configured for transcriptional elongation: the complex terminates transcription by (1) catalyzing dephosphorylation of the C-terminal domain (CTD) of Pol II subunit POLR2A/RPB1 and SUPT5H/SPT5, (2) degrading the exiting nascent RNA transcript via endonuclease activity and (3) promoting the release of Pol II from bound DNA. The integrator complex is also involved in terminating the synthesis of non-coding Pol II transcripts, such as enhancer RNAs (eRNAs), small nuclear RNAs (snRNAs), telomerase RNAs and long non-coding RNAs (lncRNAs). Within the integrator complex, INTS10 is part of the integrator tail module that acts as a platform for the recruitment of transcription factors at promoters. May be not involved in the recruitment of cytoplasmic dynein to the nuclear envelope, probably as component of the integrator complex. This is Integrator complex subunit 10 (INTS10) from Macaca fascicularis (Crab-eating macaque).